Reading from the N-terminus, the 596-residue chain is uncharacterized protein (596 aa).

The segment at 1–31 is disordered; sequence MSTSNDPVVSSHDPIKQEKEQETDLEAQVEH. Over 1–37 the chain is Cytoplasmic; it reads MSTSNDPVVSSHDPIKQEKEQETDLEAQVEHKKRNER. Basic and acidic residues predominate over residues 13–22; it reads DPIKQEKEQE. The helical transmembrane segment at 38–58 threads the bilayer; it reads GNAFVGFLILIFVYYLLRGGS. The Lumenal portion of the chain corresponds to 59–596; it reads NDNDKQEMSH…ILVSDSGEEA (538 aa). The N-linked (GlcNAc...) asparagine glycan is linked to Asn-118. Residue His-197 coordinates Zn(2+). The active site involves Asp-199. Zn(2+) is bound at residue Asp-232. The Proton acceptor role is filled by Glu-266. Zn(2+) contacts are provided by Glu-267 and Asp-295. N-linked (GlcNAc...) asparagine glycosylation is found at Asn-466, Asn-541, and Asn-555. His-565 contributes to the Zn(2+) binding site.

The protein belongs to the peptidase M20A family. Zn(2+) serves as cofactor.

It is found in the vacuole membrane. This is an uncharacterized protein from Schizosaccharomyces pombe (strain 972 / ATCC 24843) (Fission yeast).